Reading from the N-terminus, the 723-residue chain is UPF0313 protein YgiQ (723 aa).

The Radical SAM core domain occupies 372–650 (AYEMIRFSIN…KALLRYHDPA (279 aa)). Residues cysteine 386, cysteine 390, and cysteine 393 each contribute to the [4Fe-4S] cluster site. Residues 686 to 723 (EARRQNRNTRPALTKHTPVEHQRQGLAANKKRGKGAGR) form a disordered region. The segment covering 714-723 (NKKRGKGAGR) has biased composition (basic residues).

The protein belongs to the UPF0313 family. It depends on [4Fe-4S] cluster as a cofactor.

The chain is UPF0313 protein YgiQ from Salmonella typhimurium (strain LT2 / SGSC1412 / ATCC 700720).